The sequence spans 275 residues: MALVKVKPTSAGRRGMVKVVSPNLHKGAPHAALLEKKTRGSGRNNNGHITIRHRGGGHKQHYRVVDFRRNKDGIPAKVERLEYDPNRTAHIALLCYADGERRYIIAPRGLEVGATLVSGIEAPIRAGNTLPIRNIPVGTTIHCIEMIPGKGAQMARSAGASAVLLAREGTYAQVRLRSGEVRRVHIECRATIGEVGNEEHSLRQIGKAGAMRWRGVRPTVRGVAMNPVDHPHGGGEGRTGEAREPVSPWGTPSKGFKTRRNKRTNNMIVQRRKRK.

The interval 223 to 275 (VAMNPVDHPHGGGEGRTGEAREPVSPWGTPSKGFKTRRNKRTNNMIVQRRKRK) is disordered. Residues 229 to 244 (DHPHGGGEGRTGEARE) show a composition bias toward basic and acidic residues.

This sequence belongs to the universal ribosomal protein uL2 family. As to quaternary structure, part of the 50S ribosomal subunit. Forms a bridge to the 30S subunit in the 70S ribosome.

In terms of biological role, one of the primary rRNA binding proteins. Required for association of the 30S and 50S subunits to form the 70S ribosome, for tRNA binding and peptide bond formation. It has been suggested to have peptidyltransferase activity; this is somewhat controversial. Makes several contacts with the 16S rRNA in the 70S ribosome. In Bordetella petrii (strain ATCC BAA-461 / DSM 12804 / CCUG 43448), this protein is Large ribosomal subunit protein uL2.